Reading from the N-terminus, the 465-residue chain is Calcitonin gene-related peptide type 1 receptor (465 aa).

The signal sequence occupies residues Met1–Ala17. Topologically, residues Ser18–Met141 are extracellular. 4 N-linked (GlcNAc...) asparagine glycosylation sites follow: Asn22, Asn68, Asn120, and Asn125. Intrachain disulfides connect Cys50–Cys76, Cys67–Cys107, and Cys90–Cys129. The chain crosses the membrane as a helical span at residues Asn142–Phe166. At Tyr167 to Thr177 the chain is on the cytoplasmic side. The chain crosses the membrane as a helical span at residues Leu178–Val200. Over Ala201–Pro211 the chain is Extracellular. Residues Thr212 to His240 form a helical membrane-spanning segment. Residues Thr241–Leu254 lie on the Cytoplasmic side of the membrane. A helical membrane pass occupies residues Met255–Ala275. Topologically, residues Arg276–Ser291 are extracellular. An N-linked (GlcNAc...) asparagine glycan is attached at Asn289. A helical transmembrane segment spans residues Leu292 to Arg316. Topologically, residues Val317–Ser331 are cytoplasmic. The chain crosses the membrane as a helical span at residues Leu332–Leu353. Topologically, residues Leu354–Asp368 are extracellular. The helical transmembrane segment at Tyr369–Phe389 threads the bilayer. At Asn390–Thr465 the chain is on the cytoplasmic side.

It belongs to the G-protein coupled receptor 2 family.

The protein resides in the cell membrane. Its function is as follows. May function as G protein-coupled receptor for calcitonin-gene-related peptides and adrenomedullin. Specificity may be modulated by accessory proteins. May activate cAMP-dependent pathway. This is Calcitonin gene-related peptide type 1 receptor (calcrl) from Oncorhynchus gorbuscha (Pink salmon).